A 382-amino-acid chain; its full sequence is Galactokinase (382 aa).

Residue 34-37 participates in substrate binding; sequence EHTD. 124-130 contributes to the ATP binding site; it reads GAGLSSS. Residues serine 130 and glutamate 162 each coordinate Mg(2+). Aspartate 174 functions as the Proton acceptor in the catalytic mechanism. Position 223 (tyrosine 223) interacts with substrate.

The protein belongs to the GHMP kinase family. GalK subfamily.

It localises to the cytoplasm. The catalysed reaction is alpha-D-galactose + ATP = alpha-D-galactose 1-phosphate + ADP + H(+). Its pathway is carbohydrate metabolism; galactose metabolism. In terms of biological role, catalyzes the transfer of the gamma-phosphate of ATP to D-galactose to form alpha-D-galactose-1-phosphate (Gal-1-P). In Escherichia coli O1:K1 / APEC, this protein is Galactokinase.